The primary structure comprises 359 residues: Cyclin puc1 (359 aa).

Belongs to the cyclin family.

In terms of biological role, function in exit from the mitotic cycle. Contributes to negative regulation of the timing of sexual development in fission yeast, and functions at the transition between cycling and non-cycling cells. Interacts with protein kinase A. The sequence is that of Cyclin puc1 (puc1) from Schizosaccharomyces pombe (strain 972 / ATCC 24843) (Fission yeast).